The sequence spans 80 residues: Large ribosomal subunit protein eL38 (80 aa).

The protein belongs to the eukaryotic ribosomal protein eL38 family. In terms of assembly, component of the large ribosomal subunit (LSU). Mature N.crassa ribosomes consist of a small (40S) and a large (60S) subunit. The 40S small subunit contains 1 molecule of ribosomal RNA (18S rRNA) and at least 32 different proteins. The large 60S subunit contains 3 rRNA molecules (26S, 5.8S and 5S rRNA) and at least 42 different proteins.

It localises to the cytoplasm. In terms of biological role, component of the ribosome, a large ribonucleoprotein complex responsible for the synthesis of proteins in the cell. The small ribosomal subunit (SSU) binds messenger RNAs (mRNAs) and translates the encoded message by selecting cognate aminoacyl-transfer RNA (tRNA) molecules. The large subunit (LSU) contains the ribosomal catalytic site termed the peptidyl transferase center (PTC), which catalyzes the formation of peptide bonds, thereby polymerizing the amino acids delivered by tRNAs into a polypeptide chain. The nascent polypeptides leave the ribosome through a tunnel in the LSU and interact with protein factors that function in enzymatic processing, targeting, and the membrane insertion of nascent chains at the exit of the ribosomal tunnel. The chain is Large ribosomal subunit protein eL38 (rpl-38) from Neurospora crassa (strain ATCC 24698 / 74-OR23-1A / CBS 708.71 / DSM 1257 / FGSC 987).